We begin with the raw amino-acid sequence, 558 residues long: ATP synthase subunit alpha (558 aa).

172–179 provides a ligand contact to ATP; that stretch reads GDRKTGKT. Residues 536 to 558 form a disordered region; it reads ESVKVHQAIPAKTSEKSKNSTPR. A compositionally biased stretch (basic and acidic residues) spans 548–558; it reads TSEKSKNSTPR.

Belongs to the ATPase alpha/beta chains family. F-type ATPases have 2 components, CF(1) - the catalytic core - and CF(0) - the membrane proton channel. CF(1) has five subunits: alpha(3), beta(3), gamma(1), delta(1), epsilon(1). CF(0) has three main subunits: a(1), b(2) and c(9-12). The alpha and beta chains form an alternating ring which encloses part of the gamma chain. CF(1) is attached to CF(0) by a central stalk formed by the gamma and epsilon chains, while a peripheral stalk is formed by the delta and b chains.

It localises to the cell membrane. The enzyme catalyses ATP + H2O + 4 H(+)(in) = ADP + phosphate + 5 H(+)(out). Functionally, produces ATP from ADP in the presence of a proton gradient across the membrane. The alpha chain is a regulatory subunit. The protein is ATP synthase subunit alpha of Mycobacterium leprae (strain Br4923).